Consider the following 1044-residue polypeptide: Probable pre-mRNA-splicing factor ATP-dependent RNA helicase DEAH6 (1044 aa).

2 disordered regions span residues 99 to 134 (EADH…SEQL) and 152 to 211 (RRKV…VRRD). Over residues 157–167 (EDEDDGTESEE) the composition is skewed to acidic residues. Positions 168–211 (ERLRDQREREELEQHLRERDTARTRKLTEPKMSKKEQEEFVRRD) are enriched in basic and acidic residues. One can recognise a Helicase ATP-binding domain in the interval 414–577 (LNAVKDHQVL…FDQAPIFRFP (164 aa)). Residue 427–434 (GETGSGKT) participates in ATP binding. The DEAH box signature appears at 524-527 (DEAH). The Helicase C-terminal domain maps to 599-775 (AITTVLTIHV…SVVLSLKSLG (177 aa)).

This sequence belongs to the DEAD box helicase family. DEAH subfamily. PRP2 sub-subfamily. Predominantly expressed in flowers.

The catalysed reaction is ATP + H2O = ADP + phosphate + H(+). May be involved in pre-mRNA splicing. This chain is Probable pre-mRNA-splicing factor ATP-dependent RNA helicase DEAH6, found in Arabidopsis thaliana (Mouse-ear cress).